Reading from the N-terminus, the 746-residue chain is MSERRIHSVSMDLAGRTLTLETGRFAEQANGAVVVRYGDTMLLATAVASKEPRTDTDFFPLTVDYEEKMYAAGKIPGSFFKREGKPTEGAILTARLTDRPLRPLFPEGYRNEVQIIVTTFSIDMVNDPAPLSIIAASAALAISDIPFLGPVGAVQVGYIDGALQINPPMPNMANSDLDLVVAGTKEAVLMVEAGANELPEEVMLEAVIQGHQVCKQICDLQNELVKLAGRPKKEFVPPPVDTSLEEAIQQWLGNRLYEAITDANKMVRDAQTEALKREVIAHFTADEPEEELEARTAAVSAAFENILYEEVRRMILERGERVDGRGPKDIRPISVEVGLIPRVHGSGLFTRGQTQVLTLATLGSPAEEQRLDDLGIETAKRYIHHYNFPPFSTGEIRRLGSPRRRDIGHGALAERSLLAVLPPKEEFPYTMRLVSETLSSNGSSSMASVCGSSLALMDAGVPIRAPVAGIAMGLITGKDGRWRVLTDIQGIEDHLGDMDFKVAGTAKGITGLQMDIKTTGITYEIMREAFAQAREGRLHVLEKMNAVISEPRKELSPYAPRIITLQINPEKIGALIGPGGKTIRSITEATGAQIDIEEDGRVYISTADAAAAQQAVAMVEALTREIKVGDIFLGKVVRIMPFGAFVNLAPGKDGMVHVSELDVGRVENVEDVIKMGDEINVMVIGIEPGTGKVSLSRRALLTGETAEDRRAAGAGRGLRDGGRSSGSERSGDRSPRSDDRPRPRRR.

Aspartate 493 and aspartate 499 together coordinate Mg(2+). One can recognise a KH domain in the interval 560 to 619; it reads PRIITLQINPEKIGALIGPGGKTIRSITEATGAQIDIEEDGRVYISTADAAAAQQAVAMV. Positions 629–698 constitute an S1 motif domain; sequence GDIFLGKVVR…GTGKVSLSRR (70 aa). Positions 704-746 are disordered; that stretch reads ETAEDRRAAGAGRGLRDGGRSSGSERSGDRSPRSDDRPRPRRR. Composition is skewed to basic and acidic residues over residues 706-722 and 729-746; these read AEDRRAAGAGRGLRDGG and RSGDRSPRSDDRPRPRRR.

Belongs to the polyribonucleotide nucleotidyltransferase family. The cofactor is Mg(2+).

It is found in the cytoplasm. It carries out the reaction RNA(n+1) + phosphate = RNA(n) + a ribonucleoside 5'-diphosphate. Its function is as follows. Involved in mRNA degradation. Catalyzes the phosphorolysis of single-stranded polyribonucleotides processively in the 3'- to 5'-direction. This chain is Polyribonucleotide nucleotidyltransferase, found in Roseiflexus castenholzii (strain DSM 13941 / HLO8).